The primary structure comprises 513 residues: ATP synthase subunit alpha (513 aa).

Position 169-176 (169-176) interacts with ATP; that stretch reads GDRQCGKT.

The protein belongs to the ATPase alpha/beta chains family. In terms of assembly, F-type ATPases have 2 components, CF(1) - the catalytic core - and CF(0) - the membrane proton channel. CF(1) has five subunits: alpha(3), beta(3), gamma(1), delta(1), epsilon(1). CF(0) has three main subunits: a(1), b(2) and c(9-12). The alpha and beta chains form an alternating ring which encloses part of the gamma chain. CF(1) is attached to CF(0) by a central stalk formed by the gamma and epsilon chains, while a peripheral stalk is formed by the delta and b chains.

The protein localises to the cell inner membrane. The catalysed reaction is ATP + H2O + 4 H(+)(in) = ADP + phosphate + 5 H(+)(out). Produces ATP from ADP in the presence of a proton gradient across the membrane. The alpha chain is a regulatory subunit. The polypeptide is ATP synthase subunit alpha (Burkholderia vietnamiensis (strain G4 / LMG 22486) (Burkholderia cepacia (strain R1808))).